We begin with the raw amino-acid sequence, 989 residues long: MAPPMTLQQWIIWKKMNKAHEALQNTTTVTEQQKEQIILDIQNEEVQPTRRDKFRYLLYTCCATSSRVLAWMFLVCILLIIVLVSCFVTISRIQWNKDIQVLGPVIDWNVTQRAVYQPLQTRRIARSLRMQHPVPKYVEVNMTSIPQGVYYEPHPEPIVVKERVLGLSQILMINSENIANNANLTQEVKKLLTEMVNEEMQSLSDVMIDFEIPLGDPRDQEQYIHRKCYQEFANCYLVKYKEPKPWPKEGLIADQCPLPGYHAGLTYNRQSIWDYYIKVESIRPANWTTKSKYGQARLGSFYIPSSLRQINVSHVLFCSDQLYSKWYNIENTIEQNERFLLNKLNNLTSGTSVLKKRALPKDWSSQGKNALFREINVLDICSKPESVILLNTSYYSFSLWEGDCNFTKDMISQLVPECDGFYNNSKWMHMHPYACRFWRSKKNEKEETKCRDGETKRCLYYPLWDSPESTYDFGYLAYQKNFPSPICIEQQKIRDQDYEVYSLYQERKIASKAYGIDTVLFSLKNFLNYTGTPVNEMPNARAFVGLIDPKFPPSYPNVTREHYTSCNNRKRRSVDNNYAKLRSMGYALTGAVQTLSQISDINDENLQQGIYLLRDHVITLMEATLHDISVMEGMFAVQHLHTHLNHLKTMLLERRIDWTYMSSTWLQQQLQKSDDEMKVIKRIARSLVYYVKQTHSSPTATAWEIGLYYELVIPKHIYLNNWNVVNIGHLVKSAGQLTHVTIAHPYEIINKECVETIYLHLEDCTRQDYVICDVVKIVQPCGNSSDTSDCPVWAEAVKEPFVQVNPLKNGSYLVLASSTDCQIPPYVPSIVTVNETTSCFGLDFKRPLVAEERLSFEPRLPNLQLRLPHLVGIIAKIKGIKIEVTSSGESIKEQIERAKAELLRLDIHEGDTPAWIQQLAAATKDVWPAAASALQGIGNFLSGTAQGIFGTAFSLLGYLKPILIGVGVILLVILIFKIVSWIPTKKKNQ.

The interval 1–15 (MAPPMTLQQWIIWKK) is involved in virion budding. The Cytoplasmic segment spans residues 1–65 (MAPPMTLQQW…YLLYTCCATS (65 aa)). Glycyl lysine isopeptide (Lys-Gly) (interchain with G-Cter in ubiquitin) cross-links involve residues Lys-14, Lys-15, Lys-18, Lys-34, and Lys-53. Residues 66 to 88 (SRVLAWMFLVCILLIIVLVSCFV) traverse the membrane as a helical; Signal-anchor for type III membrane protein segment. The Lumenal portion of the chain corresponds to 89-961 (TISRIQWNKD…AFSLLGYLKP (873 aa)). Asn-109, Asn-141, Asn-183, Asn-286, Asn-311, Asn-346, Asn-391, Asn-405, Asn-423, Asn-528, and Asn-557 each carry an N-linked (GlcNAc...) asparagine; by host glycan. Positions 577-599 (NYAKLRSMGYALTGAVQTLSQIS) are fusion peptide. N-linked (GlcNAc...) asparagine; by host glycans are attached at residues Asn-783, Asn-809, and Asn-834. A helical membrane pass occupies residues 962–982 (ILIGVGVILLVILIFKIVSWI). The Cytoplasmic segment spans residues 983-989 (PTKKKNQ). An Endoplasmic reticulum retention signal motif is present at residues 985–987 (KKK).

In terms of assembly, the mature envelope protein consists of a trimer of SU-TM heterodimers. The N-terminus of leader peptide specifically interacts with Gag protein. This specific interaction between Gag protein and Env glycoprotein may allow particle egress. Post-translationally, envelope glycoproteins are synthesized as an inactive precursor that is processed by host furin or a furin-like protease to yield a functional hetero-oligomeric complex. In terms of processing, the transmembrane protein and the surface protein are N-glycosylated. Mono- and polyubiquitinated leader peptide are found in viral particles. Ubiquitination may be involved in regulating the balance between viral and subviral particles release.

The protein resides in the host endoplasmic reticulum membrane. It localises to the virion membrane. The surface protein (SU) attaches the virus to the host cell by binding to the cell receptor. This interaction triggers the refolding of transmembrane protein (TM) and is thought to activate its fusogenic potential by unmasking its fusion peptide. Functionally, the transmembrane protein (TM) acts as a class I viral fusion protein. Under the current model, the protein has at least 3 conformational states: pre-fusion native state, pre-hairpin intermediate state, and post-fusion hairpin state. During viral and target cell membrane fusion, the coiled coil regions (heptad repeats) assume a trimer-of-hairpins structure, positioning the fusion peptide in close proximity to the C-terminal region of the ectodomain. The formation of this structure appears to drive apposition and subsequent fusion of viral and target cell membranes. Membranes fusion leads to delivery of the nucleocapsid into the cytoplasm. Its function is as follows. The leader peptide is a component of released, infectious virions and is required for particle budding. This chain is Envelope glycoprotein gp130 (env), found in Homo sapiens (Human).